We begin with the raw amino-acid sequence, 565 residues long: Periplasmic trehalase (565 aa).

Residues M1–A30 form the signal peptide. Substrate is bound by residues R152, W159 to D160, N196, R205 to Q207, R277 to E279, and G310. Residues D312 and E496 each act as proton donor/acceptor in the active site. A substrate-binding site is contributed by E511. The tract at residues C539 to P565 is disordered.

Belongs to the glycosyl hydrolase 37 family. As to quaternary structure, monomer.

It is found in the periplasm. The catalysed reaction is alpha,alpha-trehalose + H2O = alpha-D-glucose + beta-D-glucose. In terms of biological role, provides the cells with the ability to utilize trehalose at high osmolarity by splitting it into glucose molecules that can subsequently be taken up by the phosphotransferase-mediated uptake system. This Escherichia coli O6:H1 (strain CFT073 / ATCC 700928 / UPEC) protein is Periplasmic trehalase.